A 291-amino-acid chain; its full sequence is Elongation factor Ts, mitochondrial (291 aa).

The protein belongs to the EF-Ts family.

Its subcellular location is the mitochondrion. In terms of biological role, associates with the EF-Tu.GDP complex and induces the exchange of GDP to GTP. It remains bound to the aminoacyl-tRNA.EF-Tu.GTP complex up to the GTP hydrolysis stage on the ribosome. The polypeptide is Elongation factor Ts, mitochondrial (Nematostella vectensis (Starlet sea anemone)).